The primary structure comprises 317 residues: Beta-ketoacyl-[acyl-carrier-protein] synthase III (317 aa).

Residues Cys-112 and His-244 contribute to the active site. The tract at residues 245–249 (QANIR) is ACP-binding. Asn-274 is an active-site residue.

The protein belongs to the thiolase-like superfamily. FabH family. Homodimer.

Its subcellular location is the cytoplasm. It carries out the reaction malonyl-[ACP] + acetyl-CoA + H(+) = 3-oxobutanoyl-[ACP] + CO2 + CoA. Its pathway is lipid metabolism; fatty acid biosynthesis. Catalyzes the condensation reaction of fatty acid synthesis by the addition to an acyl acceptor of two carbons from malonyl-ACP. Catalyzes the first condensation reaction which initiates fatty acid synthesis and may therefore play a role in governing the total rate of fatty acid production. Possesses both acetoacetyl-ACP synthase and acetyl transacylase activities. Its substrate specificity determines the biosynthesis of branched-chain and/or straight-chain of fatty acids. The sequence is that of Beta-ketoacyl-[acyl-carrier-protein] synthase III from Rickettsia akari (strain Hartford).